The following is a 690-amino-acid chain: Peroxidase (690 aa).

The N-terminal stretch at 1-20 (MIRARDLLLLALLGFISSAL) is a signal peptide. The cysteines at positions 100 and 112 are disulfide-linked. The Proton acceptor role is filled by His185. Residue Asn310 is glycosylated (N-linked (GlcNAc...) asparagine). Cys315 and Cys324 are oxidised to a cystine. His437 contacts heme b. Disulfide bonds link Cys536-Cys592 and Cys636-Cys662.

Belongs to the peroxidase family. XPO subfamily. The cofactor is heme b.

It is found in the secreted. The enzyme catalyses 2 a phenolic donor + H2O2 = 2 a phenolic radical donor + 2 H2O. Its function is as follows. Involved in the chorion hardening process, through protein cross-linking mediated by the formation of di- and tri-tyrosine bonds. The polypeptide is Peroxidase (Pxd) (Drosophila melanogaster (Fruit fly)).